The primary structure comprises 264 residues: Thymidylate synthase (264 aa).

Residue arginine 21 coordinates dUMP. Histidine 51 is a (6R)-5,10-methylene-5,6,7,8-tetrahydrofolate binding site. Arginine 126 to arginine 127 serves as a coordination point for dUMP. Cysteine 146 functions as the Nucleophile in the catalytic mechanism. DUMP contacts are provided by residues arginine 166–aspartate 169, asparagine 177, and histidine 207–tyrosine 209. (6R)-5,10-methylene-5,6,7,8-tetrahydrofolate is bound at residue aspartate 169. Alanine 263 serves as a coordination point for (6R)-5,10-methylene-5,6,7,8-tetrahydrofolate.

Belongs to the thymidylate synthase family. Bacterial-type ThyA subfamily. As to quaternary structure, homodimer.

It localises to the cytoplasm. The enzyme catalyses dUMP + (6R)-5,10-methylene-5,6,7,8-tetrahydrofolate = 7,8-dihydrofolate + dTMP. The protein operates within pyrimidine metabolism; dTTP biosynthesis. Its function is as follows. Catalyzes the reductive methylation of 2'-deoxyuridine-5'-monophosphate (dUMP) to 2'-deoxythymidine-5'-monophosphate (dTMP) while utilizing 5,10-methylenetetrahydrofolate (mTHF) as the methyl donor and reductant in the reaction, yielding dihydrofolate (DHF) as a by-product. This enzymatic reaction provides an intracellular de novo source of dTMP, an essential precursor for DNA biosynthesis. The sequence is that of Thymidylate synthase from Shewanella baltica (strain OS155 / ATCC BAA-1091).